Consider the following 477-residue polypeptide: tRNA-2-methylthio-N(6)-dimethylallyladenosine synthase (477 aa).

In terms of domain architecture, MTTase N-terminal spans Gly13–Ala130. Residues Cys22, Cys59, Cys93, Cys178, Cys182, and Cys185 each coordinate [4Fe-4S] cluster. Residues Glu164–Ala396 form the Radical SAM core domain. Residues Glu399 to Ala462 form the TRAM domain.

Belongs to the methylthiotransferase family. MiaB subfamily. In terms of assembly, monomer. The cofactor is [4Fe-4S] cluster.

The protein resides in the cytoplasm. It carries out the reaction N(6)-dimethylallyladenosine(37) in tRNA + (sulfur carrier)-SH + AH2 + 2 S-adenosyl-L-methionine = 2-methylsulfanyl-N(6)-dimethylallyladenosine(37) in tRNA + (sulfur carrier)-H + 5'-deoxyadenosine + L-methionine + A + S-adenosyl-L-homocysteine + 2 H(+). Its function is as follows. Catalyzes the methylthiolation of N6-(dimethylallyl)adenosine (i(6)A), leading to the formation of 2-methylthio-N6-(dimethylallyl)adenosine (ms(2)i(6)A) at position 37 in tRNAs that read codons beginning with uridine. This chain is tRNA-2-methylthio-N(6)-dimethylallyladenosine synthase, found in Hydrogenovibrio crunogenus (strain DSM 25203 / XCL-2) (Thiomicrospira crunogena).